The following is a 170-amino-acid chain: Large ribosomal subunit protein uL16 (170 aa).

It belongs to the universal ribosomal protein uL16 family.

This is Large ribosomal subunit protein uL16 from Methanoculleus marisnigri (strain ATCC 35101 / DSM 1498 / JR1).